Consider the following 352-residue polypeptide: F-box/kelch-repeat protein SKIP30 (352 aa).

An F-box domain is found at 9–55 (SGLLDGIPEAVALRCLAHVPLHLHPNLELVSRSWRAAIRSHELFRVR). Kelch repeat units follow at residues 57 to 109 (ELRS…TTAG), 110 to 167 (MLFV…VLQG), 168 to 215 (KIVV…LVVN), 243 to 293 (YGWP…MTSL), and 296 to 351 (EVLI…TQLT).

As to quaternary structure, part of a SCF (ASK-cullin-F-box) protein ligase complex. Interacts with SKP1A/ASK1.

Its pathway is protein modification; protein ubiquitination. Functionally, component of SCF(ASK-cullin-F-box) E3 ubiquitin ligase complexes, which may mediate the ubiquitination and subsequent proteasomal degradation of target proteins. The sequence is that of F-box/kelch-repeat protein SKIP30 (SKIP30) from Arabidopsis thaliana (Mouse-ear cress).